A 42-amino-acid polypeptide reads, in one-letter code: MEGLTKFLSTAPVLIMALLTFTAGLLIEFNRFYPDLLFHPLG.

The helical transmembrane segment at 7–27 (FLSTAPVLIMALLTFTAGLLI) threads the bilayer.

The protein belongs to the PsaJ family.

It is found in the cellular thylakoid membrane. Functionally, may help in the organization of the PsaE and PsaF subunits. This chain is Photosystem I reaction center subunit IX, found in Rippkaea orientalis (strain PCC 8801 / RF-1) (Cyanothece sp. (strain PCC 8801)).